The chain runs to 362 residues: Phosphate acyltransferase (362 aa).

The disordered stretch occupies residues 343–362 (TKKISTSTINPKTSETTKES). Positions 344–356 (KKISTSTINPKTS) are enriched in polar residues.

This sequence belongs to the PlsX family. In terms of assembly, homodimer. Probably interacts with PlsY.

The protein resides in the cytoplasm. It carries out the reaction a fatty acyl-[ACP] + phosphate = an acyl phosphate + holo-[ACP]. The protein operates within lipid metabolism; phospholipid metabolism. In terms of biological role, catalyzes the reversible formation of acyl-phosphate (acyl-PO(4)) from acyl-[acyl-carrier-protein] (acyl-ACP). This enzyme utilizes acyl-ACP as fatty acyl donor, but not acyl-CoA. The protein is Phosphate acyltransferase of Aster yellows witches'-broom phytoplasma (strain AYWB).